We begin with the raw amino-acid sequence, 626 residues long: E3 ubiquitin-protein ligase CHFR (626 aa).

An FHA domain is found at Trp-34–Val-85. 2 stretches are compositionally biased toward polar residues: residues Glu-123–Ser-133 and Thr-140–Gln-149. Disordered regions lie at residues Glu-123–Thr-170 and Pro-188–Glu-229. Residues Ser-158–Thr-170 are compositionally biased toward low complexity. Over residues Ser-194–Glu-203 the composition is skewed to basic and acidic residues. An RING-type zinc finger spans residues Cys-267–Arg-306. Disordered regions lie at residues Asp-351–Pro-387 and Ile-402–Asn-428. The span at Asp-363–Ser-381 shows a compositional bias: acidic residues. The segment covering Ser-416–Asn-428 has biased composition (polar residues). The PBZ-type zinc-finger motif lies at Pro-595 to His-617.

This sequence belongs to the CHFR family.

The protein localises to the nucleus. It is found in the PML body. It carries out the reaction S-ubiquitinyl-[E2 ubiquitin-conjugating enzyme]-L-cysteine + [acceptor protein]-L-lysine = [E2 ubiquitin-conjugating enzyme]-L-cysteine + N(6)-ubiquitinyl-[acceptor protein]-L-lysine.. It participates in protein modification; protein ubiquitination. E3 ubiquitin-protein ligase that functions in the antephase checkpoint by actively delaying passage into mitosis in response to microtubule poisons. Acts in early prophase before chromosome condensation, when the centrosome move apart from each other along the periphery of the nucleus. Probably involved in signaling the presence of mitotic stress caused by microtubule poisons by mediating the 'Lys-48'-linked ubiquitination of target proteins, leading to their degradation by the proteasome. May also promote the formation of 'Lys-63'-linked polyubiquitin chains and functions with the specific ubiquitin-conjugating ubc13-mms2 (ube2n-ube2v2) heterodimer. Substrates that are polyubiquitinated at 'Lys-63' are usually not targeted for degradation, but are rather involved in signaling cellular stress. The chain is E3 ubiquitin-protein ligase CHFR (chfr) from Xenopus tropicalis (Western clawed frog).